The sequence spans 298 residues: Glycine--tRNA ligase alpha subunit (298 aa).

Belongs to the class-II aminoacyl-tRNA synthetase family. In terms of assembly, tetramer of two alpha and two beta subunits.

It localises to the cytoplasm. The catalysed reaction is tRNA(Gly) + glycine + ATP = glycyl-tRNA(Gly) + AMP + diphosphate. This Neisseria meningitidis serogroup C / serotype 2a (strain ATCC 700532 / DSM 15464 / FAM18) protein is Glycine--tRNA ligase alpha subunit.